The sequence spans 272 residues: Putative pyruvate, phosphate dikinase regulatory protein (272 aa).

An ADP-binding site is contributed by 153–160 (GVSRTSKT).

This sequence belongs to the pyruvate, phosphate/water dikinase regulatory protein family. PDRP subfamily.

It carries out the reaction N(tele)-phospho-L-histidyl/L-threonyl-[pyruvate, phosphate dikinase] + ADP = N(tele)-phospho-L-histidyl/O-phospho-L-threonyl-[pyruvate, phosphate dikinase] + AMP + H(+). The enzyme catalyses N(tele)-phospho-L-histidyl/O-phospho-L-threonyl-[pyruvate, phosphate dikinase] + phosphate + H(+) = N(tele)-phospho-L-histidyl/L-threonyl-[pyruvate, phosphate dikinase] + diphosphate. In terms of biological role, bifunctional serine/threonine kinase and phosphorylase involved in the regulation of the pyruvate, phosphate dikinase (PPDK) by catalyzing its phosphorylation/dephosphorylation. The sequence is that of Putative pyruvate, phosphate dikinase regulatory protein from Streptococcus sanguinis (strain SK36).